We begin with the raw amino-acid sequence, 207 residues long: Thiamine-phosphate synthase (207 aa).

4-amino-2-methyl-5-(diphosphooxymethyl)pyrimidine-binding positions include 36–40 (QLRIK) and Asp-68. Residues Asp-69 and Asp-88 each contribute to the Mg(2+) site. Ser-106 contributes to the 4-amino-2-methyl-5-(diphosphooxymethyl)pyrimidine binding site. 132 to 134 (TKT) is a binding site for 2-[(2R,5Z)-2-carboxy-4-methylthiazol-5(2H)-ylidene]ethyl phosphate. Residue Lys-135 coordinates 4-amino-2-methyl-5-(diphosphooxymethyl)pyrimidine. 2-[(2R,5Z)-2-carboxy-4-methylthiazol-5(2H)-ylidene]ethyl phosphate contacts are provided by residues Gly-162 and 182 to 183 (VS).

The protein belongs to the thiamine-phosphate synthase family. Mg(2+) is required as a cofactor.

The enzyme catalyses 2-[(2R,5Z)-2-carboxy-4-methylthiazol-5(2H)-ylidene]ethyl phosphate + 4-amino-2-methyl-5-(diphosphooxymethyl)pyrimidine + 2 H(+) = thiamine phosphate + CO2 + diphosphate. The catalysed reaction is 2-(2-carboxy-4-methylthiazol-5-yl)ethyl phosphate + 4-amino-2-methyl-5-(diphosphooxymethyl)pyrimidine + 2 H(+) = thiamine phosphate + CO2 + diphosphate. It catalyses the reaction 4-methyl-5-(2-phosphooxyethyl)-thiazole + 4-amino-2-methyl-5-(diphosphooxymethyl)pyrimidine + H(+) = thiamine phosphate + diphosphate. The protein operates within cofactor biosynthesis; thiamine diphosphate biosynthesis; thiamine phosphate from 4-amino-2-methyl-5-diphosphomethylpyrimidine and 4-methyl-5-(2-phosphoethyl)-thiazole: step 1/1. Condenses 4-methyl-5-(beta-hydroxyethyl)thiazole monophosphate (THZ-P) and 2-methyl-4-amino-5-hydroxymethyl pyrimidine pyrophosphate (HMP-PP) to form thiamine monophosphate (TMP). This is Thiamine-phosphate synthase from Pyrococcus abyssi (strain GE5 / Orsay).